We begin with the raw amino-acid sequence, 1416 residues long: DNA-directed RNA polymerase subunit beta (1416 aa).

Belongs to the RNA polymerase beta chain family. In terms of assembly, in plastids the minimal PEP RNA polymerase catalytic core is composed of four subunits: alpha, beta, beta', and beta''. When a (nuclear-encoded) sigma factor is associated with the core the holoenzyme is formed, which can initiate transcription.

Its subcellular location is the plastid. It localises to the chloroplast. It catalyses the reaction RNA(n) + a ribonucleoside 5'-triphosphate = RNA(n+1) + diphosphate. In terms of biological role, DNA-dependent RNA polymerase catalyzes the transcription of DNA into RNA using the four ribonucleoside triphosphates as substrates. The polypeptide is DNA-directed RNA polymerase subunit beta (Oltmannsiellopsis viridis (Marine flagellate)).